A 161-amino-acid chain; its full sequence is uncharacterized protein (161 aa).

A helical membrane pass occupies residues 16 to 36 (KLGLVVAIFFFMMGTTVVVLY).

The protein resides in the membrane. This is an uncharacterized protein from Encephalitozoon cuniculi (strain GB-M1) (Microsporidian parasite).